The primary structure comprises 373 residues: Melanoma-associated antigen C2 (373 aa).

The disordered stretch occupies residues 1-102 (MPPVPGVPFR…QGPSQSPLSS (102 aa)). Positions 40 to 60 (SSASSTLYLVFSPSSFSTSSS) are enriched in low complexity. A compositionally biased stretch (pro residues) spans 85-94 (SSPPQGPPQG). The segment at 135-373 (SSFTYTLDEK…VMSSNVSFSE (239 aa)) is interaction with TRIM28. The MAGE domain maps to 141–336 (LDEKVAELVE…SSFPSWYKDA (196 aa)).

Interacts with TRIM28 and UBE2H. As to expression, not expressed in normal tissues, except in germ cells in the seminiferous tubules and in Purkinje cells of the cerebellum. Expressed in various tumors, including melanoma, lymphoma, as well as pancreatic cancer, mammary gland cancer, non-small cell lung cancer and liver cancer. In hepatocellular carcinoma, there is an inverse correlation between tumor differentiation and protein expression, i.e. the lower the differentiation, the higher percentage of expression.

Its subcellular location is the cytoplasm. The protein localises to the nucleus. Proposed to enhance ubiquitin ligase activity of RING-type zinc finger-containing E3 ubiquitin-protein ligases. In vitro enhances ubiquitin ligase activity of TRIM28 and stimulates p53/TP53 ubiquitination in presence of Ubl-conjugating enzyme UBE2H leading to p53/TP53 degradation. Proposed to act through recruitment and/or stabilization of the Ubl-conjugating enzymes (E2) at the E3:substrate complex. In Homo sapiens (Human), this protein is Melanoma-associated antigen C2 (MAGEC2).